The primary structure comprises 314 residues: MQKLPAGRKRSYLMYTLTGLKLKNPTILAAGVLGTTGASLCRVAREGGAGAVVTKSIGPAPKTGHPNPSMIELDCGFLNAMGLPNPSYPGFLQELEFAKENSDAPVIASIFGGTPSEFAEVAEGLLPAKPDAFELNVSCPHAEGYGAAIGSNPCLVEAVTAAVKDVVNVPVWVKLTPNVADITCIGNAAESGGADAVVAINTVKGMAIDIESGYPVLGNRSGGLSGKAVKPVAVKCVYDLFTALEIPVIGVGGVSSWEDAVEMIMAGAAAVQVGSAVYDRVGIFSEIGKGIEAFLKRKGYSDIKKITGLAHEMV.

Substrate contacts are provided by residues K55, 79 to 83, and N136; that span reads NAMGL. 55–56 is an FMN binding site; that stretch reads KS. N136 is a binding site for FMN. Residue C139 is the Nucleophile of the active site. The FMN site is built by K174 and I200. 201-202 is a substrate binding site; the sequence is NT. FMN-binding positions include G226, 252-253, and 274-275; these read GG and GS.

Belongs to the dihydroorotate dehydrogenase family. Type 1 subfamily. Heterotetramer of 2 PyrK and 2 PyrD type B subunits. It depends on FMN as a cofactor.

The protein localises to the cytoplasm. It carries out the reaction (S)-dihydroorotate + NAD(+) = orotate + NADH + H(+). The protein operates within pyrimidine metabolism; UMP biosynthesis via de novo pathway; orotate from (S)-dihydroorotate (NAD(+) route): step 1/1. Functionally, catalyzes the conversion of dihydroorotate to orotate with NAD(+) as electron acceptor. The chain is Dihydroorotate dehydrogenase B (NAD(+)), catalytic subunit (pyrD) from Methanosarcina mazei (strain ATCC BAA-159 / DSM 3647 / Goe1 / Go1 / JCM 11833 / OCM 88) (Methanosarcina frisia).